Here is a 56-residue protein sequence, read N- to C-terminus: Large ribosomal subunit protein bL32 (56 aa).

A disordered region spans residues methionine 1 to histidine 40. Residues lysine 7–arginine 16 show a composition bias toward basic residues. Over residues serine 21–alanine 31 the composition is skewed to polar residues.

Belongs to the bacterial ribosomal protein bL32 family.

This is Large ribosomal subunit protein bL32 from Shewanella halifaxensis (strain HAW-EB4).